A 173-amino-acid chain; its full sequence is NADH-ubiquinone oxidoreductase chain 6 (173 aa).

Helical transmembrane passes span 1 to 21, 27 to 47, 48 to 68, 87 to 107, and 139 to 159; these read MTYF…AVAS, YGVV…LSLG, VSFV…VVFV, VVGY…IGGF, and CGVG…FVVL.

This sequence belongs to the complex I subunit 6 family.

The protein resides in the mitochondrion membrane. The enzyme catalyses a ubiquinone + NADH + 5 H(+)(in) = a ubiquinol + NAD(+) + 4 H(+)(out). Functionally, core subunit of the mitochondrial membrane respiratory chain NADH dehydrogenase (Complex I) that is believed to belong to the minimal assembly required for catalysis. Complex I functions in the transfer of electrons from NADH to the respiratory chain. The immediate electron acceptor for the enzyme is believed to be ubiquinone. The chain is NADH-ubiquinone oxidoreductase chain 6 (MT-ND6) from Cepphus columba (Pigeon guillemot).